A 58-amino-acid polypeptide reads, in one-letter code: Protein SHMOOSE (58 aa).

Positions 27–58 are disordered; sequence FGATPNKSNNHAHYYNHPNPDFPNSPHPYHPR. Positions 35–45 are enriched in low complexity; the sequence is NNHAHYYNHPN. Over residues 46–58 the composition is skewed to pro residues; that stretch reads PDFPNSPHPYHPR.

As to quaternary structure, interacts with IMMT/mitofilin. In terms of tissue distribution, detected in cerebrospinal fluid (at protein level).

The protein localises to the mitochondrion. The protein resides in the nucleus. Increases neural cell metabolic activity and mitochondrial oxygen consumption rate. The protein is Protein SHMOOSE of Homo sapiens (Human).